The following is an 83-amino-acid chain: uncharacterized protein (83 aa).

This is an uncharacterized protein from Bacillus subtilis (strain 168).